The sequence spans 48 residues: Disintegrin leucogastin-A (48 aa).

Residues 1 to 47 enclose the Disintegrin domain; it reads DCASGPCCRDCKFLEEFTICNMARGDDMNDYCNGKTCDCPRNPHKWP. 4 cysteine pairs are disulfide-bonded: Cys-2–Cys-11, Cys-7–Cys-32, Cys-8–Cys-37, and Cys-20–Cys-39. Positions 24-26 match the Cell attachment site motif; sequence RGD.

Belongs to the venom metalloproteinase (M12B) family. P-II subfamily. P-IIa sub-subfamily. In terms of assembly, monomer (disintegrin). As to expression, expressed by the venom gland.

It is found in the secreted. Functionally, inhibits ADP-induced human platelet aggregation. The protein is Disintegrin leucogastin-A of Echis leucogaster (Roman's saw-scaled viper).